Here is a 148-residue protein sequence, read N- to C-terminus: Aspartate carbamoyltransferase regulatory chain (148 aa).

Zn(2+) contacts are provided by Cys106, Cys111, Cys134, and Cys137.

The protein belongs to the PyrI family. In terms of assembly, contains catalytic and regulatory chains. Requires Zn(2+) as cofactor.

Its function is as follows. Involved in allosteric regulation of aspartate carbamoyltransferase. The protein is Aspartate carbamoyltransferase regulatory chain of Methanococcus maripaludis (strain C6 / ATCC BAA-1332).